Consider the following 299-residue polypeptide: Zinc finger protein-like 1 homolog (299 aa).

A B box-type; degenerate zinc finger spans residues 1-43 (MGLCKCPKRLVTNQFCFEHRVNVCEHCMVQSHPKCIVQSYLQW). The segment at 53-101 (CTLCGTTLEQGDCVRLVCYHVFHWDCLNARQAALPANTAPRGHQCPACS) adopts an RING-type; atypical zinc-finger fold. The segment at 200-231 (AGDYASSRRPLLPRQSPIGGTDRDDNKYQRRT) is disordered. The residue at position 215 (serine 215) is a Phosphoserine. The helical transmembrane segment at 256-276 (WFLVTAGILAFVLFVYLMAWL) threads the bilayer.

It belongs to the ZFPL1 family.

The protein localises to the membrane. The protein is Zinc finger protein-like 1 homolog of Drosophila melanogaster (Fruit fly).